Consider the following 356-residue polypeptide: C-X-C chemokine receptor type 2 (356 aa).

Residues 1–46 (MEYINWDNYSLEDLFGDIDNYTYNTEMPIIPADSAPCRPESLDINK) are Extracellular-facing. Asparagine 8 and asparagine 20 each carry an N-linked (GlcNAc...) asparagine glycan. Residues 47–73 (YAVVVIYVLVFVLNLLGNSLVIMVVLY) traverse the membrane as a helical segment. Residues 74 to 82 (SRVSHSVTD) lie on the Cytoplasmic side of the membrane. Residues 83–103 (VYLLNLAIADLLFALTLPIWA) traverse the membrane as a helical segment. At 104–118 (VSKVKGWIFGTPLCK) the chain is on the extracellular side. Residues cysteine 117 and cysteine 194 are joined by a disulfide bond. A helical membrane pass occupies residues 119–140 (IVSLLKEVNFYSGILLLASISM). Over 141–161 (DRYLAIVHATRRLTQKKHWVK) the chain is Cytoplasmic. The helical transmembrane segment at 162–181 (FICLGIWALSLILSLPIFVF) threads the bilayer. Over 182–206 (RRAINPPYSSPVCYEDMGTNTTKLR) the chain is Extracellular. A helical membrane pass occupies residues 207 to 229 (IVMRALPQTFGFIVPLMIMLFCY). At 230-249 (GLTLRTLFEAHMGQKHRAMR) the chain is on the cytoplasmic side. Residues 250–269 (VIFAVVLVFLLCWLPYNLVA) form a helical membrane-spanning segment. Residues 270-290 (DTLMRLQAIEETCQRRNDIGR) are Extracellular-facing. A helical transmembrane segment spans residues 291 to 311 (ALDATEILGFFHSCLNPLIYA). Residues 312–356 (FIGQKFRHGLLKIMAFHGLISKEYLPKDSRPSFVGSSSANTSTTF) are Cytoplasmic-facing.

The protein belongs to the G-protein coupled receptor 1 family. Interacts with IL8. Interacts with GNAI2. Post-translationally, phosphorylated upon ligand binding; which is required for desensitization.

The protein resides in the cell membrane. Receptor for interleukin-8 which is a powerful neutrophil chemotactic factor. Binding of IL-8 to the receptor causes activation of neutrophils. This response is mediated via a G-protein that activates a phosphatidylinositol-calcium second messenger system. Binds to IL-8 with high affinity. Also binds with high affinity to CXCL3, GRO/MGSA and NAP-2. This chain is C-X-C chemokine receptor type 2 (CXCR2), found in Canis lupus familiaris (Dog).